Reading from the N-terminus, the 118-residue chain is Small ribosomal subunit protein uS13 (118 aa).

The tract at residues 94–118 is disordered; sequence SLPLRGQRTKTNARTRKGPRKPIKK.

Belongs to the universal ribosomal protein uS13 family. In terms of assembly, part of the 30S ribosomal subunit. Forms a loose heterodimer with protein S19. Forms two bridges to the 50S subunit in the 70S ribosome.

Its function is as follows. Located at the top of the head of the 30S subunit, it contacts several helices of the 16S rRNA. In the 70S ribosome it contacts the 23S rRNA (bridge B1a) and protein L5 of the 50S subunit (bridge B1b), connecting the 2 subunits; these bridges are implicated in subunit movement. Contacts the tRNAs in the A and P-sites. The sequence is that of Small ribosomal subunit protein uS13 from Vibrio parahaemolyticus serotype O3:K6 (strain RIMD 2210633).